Here is a 238-residue protein sequence, read N- to C-terminus: Probable 2-phosphosulfolactate phosphatase (238 aa).

Belongs to the ComB family. It depends on Mg(2+) as a cofactor.

The catalysed reaction is (2R)-O-phospho-3-sulfolactate + H2O = (2R)-3-sulfolactate + phosphate. In Carboxydothermus hydrogenoformans (strain ATCC BAA-161 / DSM 6008 / Z-2901), this protein is Probable 2-phosphosulfolactate phosphatase.